A 199-amino-acid chain; its full sequence is dITP/XTP pyrophosphatase (199 aa).

S12–K17 contacts substrate. The active-site Proton acceptor is the D73. D73 serves as a coordination point for Mg(2+). Substrate-binding positions include S74, F157 to D160, K180, and H185 to R186.

It belongs to the HAM1 NTPase family. As to quaternary structure, homodimer. The cofactor is Mg(2+).

It catalyses the reaction XTP + H2O = XMP + diphosphate + H(+). The catalysed reaction is dITP + H2O = dIMP + diphosphate + H(+). It carries out the reaction ITP + H2O = IMP + diphosphate + H(+). Its function is as follows. Pyrophosphatase that catalyzes the hydrolysis of nucleoside triphosphates to their monophosphate derivatives, with a high preference for the non-canonical purine nucleotides XTP (xanthosine triphosphate), dITP (deoxyinosine triphosphate) and ITP. Seems to function as a house-cleaning enzyme that removes non-canonical purine nucleotides from the nucleotide pool, thus preventing their incorporation into DNA/RNA and avoiding chromosomal lesions. This is dITP/XTP pyrophosphatase from Neisseria meningitidis serogroup B (strain ATCC BAA-335 / MC58).